The chain runs to 303 residues: Acidic endochitinase WIN6.2B (303 aa).

A signal peptide spans 1-21; the sequence is MSVWAFAFFSLFLSLSVRGSA. Residues 22 to 62 form the Chitin-binding type-1 domain; that stretch reads EQCGQQAGDALCPGGLCCSSYGWCGTTADYCGDGCQSQCDG. Disulfide bonds link cysteine 24/cysteine 39, cysteine 33/cysteine 45, cysteine 38/cysteine 52, and cysteine 56/cysteine 60. Positions 82-303 are chitinase; sequence DGYLSDIIPE…YGLLGLKDTM (222 aa). Glutamate 150 serves as the catalytic Proton donor. Cysteine 253 and cysteine 286 are joined by a disulfide.

Belongs to the glycosyl hydrolase 19 family. Chitinase class I subfamily.

It catalyses the reaction Random endo-hydrolysis of N-acetyl-beta-D-glucosaminide (1-&gt;4)-beta-linkages in chitin and chitodextrins.. In terms of biological role, defense against chitin-containing fungal pathogens. The polypeptide is Acidic endochitinase WIN6.2B (Populus trichocarpa (Western balsam poplar)).